The primary structure comprises 558 residues: Tyrosine N-monooxygenase (558 aa).

The chain crosses the membrane as a helical span at residues 13–33; that stretch reads VLAAPLLSSSAILKLLLFVVT. The disordered stretch occupies residues 48–67; that stretch reads TTKCSSTTCASPPAGVGNPP. Positions 49 to 65 are enriched in low complexity; sequence TKCSSTTCASPPAGVGN. 5 residues coordinate heme b: Arg138, Arg167, His422, Arg491, and Cys493.

The protein belongs to the cytochrome P450 family. Heme b serves as cofactor.

It localises to the endoplasmic reticulum membrane. The enzyme catalyses L-tyrosine + 2 reduced [NADPH--hemoprotein reductase] + 2 O2 = (E)-4-hydroxyphenylacetaldehyde oxime + 2 oxidized [NADPH--hemoprotein reductase] + CO2 + 3 H2O + 2 H(+). The catalysed reaction is L-tyrosine + reduced [NADPH--hemoprotein reductase] + O2 = N-hydroxy-L-tyrosine + oxidized [NADPH--hemoprotein reductase] + H2O + 2 H(+). It catalyses the reaction N-hydroxy-L-tyrosine + reduced [NADPH--hemoprotein reductase] + O2 = N,N-dihydroxy-L-tyrosine + oxidized [NADPH--hemoprotein reductase] + H2O + H(+). It carries out the reaction N,N-dihydroxy-L-tyrosine + H(+) = (E)-4-hydroxyphenylacetaldehyde oxime + CO2 + H2O. It functions in the pathway secondary metabolite biosynthesis; dhurrin biosynthesis; dhurrin from L-tyrosine: step 1/3. Its function is as follows. Cytochrome P450 involved in the biosynthesis of the cyanogenic glucoside dhurrin. Catalyzes the conversion of L-tyrosine to p-hydroxyphenylacetaldehyde oxime, via the N-hydroxy-L-tyrosine and N,N-dihydroxy-L-tyrosine intermediates. Produces the (E) isomer of the final oxime product. This Sorghum bicolor (Sorghum) protein is Tyrosine N-monooxygenase (CYP79A1).